We begin with the raw amino-acid sequence, 108 residues long: uncharacterized protein (108 aa).

A helical transmembrane segment spans residues 59 to 81 (NIVIILWKIMVVIISSIIHRTYI).

The protein resides in the membrane. This is an uncharacterized protein from Rickettsia conorii (strain ATCC VR-613 / Malish 7).